Here is a 952-residue protein sequence, read N- to C-terminus: Bromodomain testis-specific protein (952 aa).

The 107-residue stretch at 26-132 (RLTNQLQFLQ…KLFMQKLSQM (107 aa)) folds into the Bromo 1 domain. The segment covering 141 to 150 (GKERMKKDIQ) has biased composition (basic and acidic residues). The segment at 141-168 (GKERMKKDIQQKTAVSSAKEQTPSKSAE) is disordered. Residues 151-167 (QKTAVSSAKEQTPSKSA) show a composition bias toward polar residues. Phosphoserine is present on S186. Positions 208–219 (KGVKRRADTTTP) match the Nuclear localization signal motif. Residues 209–257 (GVKRRADTTTPTTSSAKASSESPPPLREAKPANAPVKENTVKSVLPDSQ) form a disordered region. The span at 216–229 (TTTPTTSSAKASSE) shows a compositional bias: low complexity. A Bromo 2 domain is found at 266-375 (VKVTEQLKHC…DVFEMHFAKI (110 aa)). Disordered stretches follow at residues 392-420 (SAKA…ERVQ), 442-504 (VPLR…NAKP), 607-746 (QLNC…GCQV), and 850-930 (KHLE…RREA). Residues 417–442 (ERVQRLAKLQEQLNAVHQQLQVLSQV) are a coiled coil. The span at 445-463 (RKLKKKNEKSKRAPKRKKV) shows a compositional bias: basic residues. One can recognise an NET domain in the interval 495–577 (KLEEEDNAKP…ACLRKRSLKP (83 aa)). The segment covering 610–619 (CRKRQTKRPA) has biased composition (basic residues). Residues 625-638 (PRPPLPPPPPPPPE) are compositionally biased toward pro residues. Over residues 646–681 (SDSSSSSSSSGSGSSSSSSSSSGSGSSSSDSSSSDS) the composition is skewed to low complexity. Over residues 718–729 (SAETALVQQSTG) the composition is skewed to polar residues. A coiled-coil region spans residues 837–936 (EKEVKARTQE…RREAMAGTID (100 aa)). The segment covering 850 to 867 (KHLEHSAKDPKVSQESQR) has biased composition (basic and acidic residues). Residues 874 to 883 (TPESSSNKVQ) show a composition bias toward polar residues. Residues 893 to 902 (EQQQLPSPSE) are compositionally biased toward low complexity. Positions 911–930 (LLKDRNLAREKEQERRRREA) are enriched in basic and acidic residues.

Belongs to the BET family. In terms of assembly, interacts with the acetylated N-terminus of histone H1, H2, H3 and H4. Interacts with P-TEFb components CDK9 and CCNT1/cyclin-T1. Interacts with mRNA splicing machinery proteins SRSF2, DDX5, HNRNPK and TARDBP. Interacts with SMARCE1. Ubiquitinated in a SPOP-dependent manner, leading to proteasomal degradation.

It is found in the nucleus. Functionally, testis-specific chromatin protein that specifically binds histone H4 acetylated at 'Lys-5' and 'Lys-8' (H4K5ac and H4K8ac, respectively) and plays a key role in spermatogenesis. Required in late pachytene spermatocytes: plays a role in meiotic and post-meiotic cells by binding to acetylated histones at the promoter of specific meiotic and post-meiotic genes, facilitating their activation at the appropriate time. In the post-meiotic phase of spermatogenesis, binds to hyperacetylated histones and participates in their general removal from DNA. Also recognizes and binds a subset of butyrylated histones: able to bind histone H4 butyrylated at 'Lys-8' (H4K8ac), while it is not able to bind H4 butyrylated at 'Lys-5' (H4K5ac). Also acts as a component of the splicing machinery in pachytene spermatocytes and round spermatids and participates in 3'-UTR truncation of specific mRNAs in post-meiotic spermatids. Required for chromocenter organization, a structure comprised of peri-centromeric heterochromatin. This Rattus norvegicus (Rat) protein is Bromodomain testis-specific protein (Brdt).